Reading from the N-terminus, the 104-residue chain is LKTFCLFLQIAVFIALGIQIFLCGTDALNNENELFSVEYCGANCTQQDNGSWTKCKGNCTCYHEDGKRYGLCLSTEYTDFTQFPKPTSEEIADASPRPKETNSH.

An N-terminal signal peptide occupies residues 1-27; sequence LKTFCLFLQIAVFIALGIQIFLCGTDA. Cystine bridges form between C40–C59, C44–C61, and C55–C72. N-linked (GlcNAc...) asparagine glycosylation is found at N43, N49, and N58. Residues 85-104 are disordered; sequence KPTSEEIADASPRPKETNSH.

Its subcellular location is the secreted. In terms of biological role, salivary chemokine-binding protein which binds to host chemokines CXCL1 and CXCL8. The polypeptide is Evasin P1174 (Ixodes ricinus (Common tick)).